The following is a 547-amino-acid chain: Delta-guaiene synthase 3 (547 aa).

Mg(2+) contacts are provided by D299, D303, and D444. Positions 299-303 (DDTYD) match the DDXXD motif motif.

This sequence belongs to the terpene synthase family. Requires Mg(2+) as cofactor.

The enzyme catalyses (2E,6E)-farnesyl diphosphate = delta-guaiene + diphosphate. It carries out the reaction (2E,6E)-farnesyl diphosphate = alpha-guaiene + diphosphate. It participates in secondary metabolite biosynthesis; terpenoid biosynthesis. Functionally, sesquiterpene synthase involved in the biosynthesis of delta-guaiene (78.2%) and alpha-guaiene (20.9%), two structures composed of five- and seven-membered rings. Also produces 0.9% of alpha-humulene. The protein is Delta-guaiene synthase 3 (C4) of Aquilaria crassna (Eagle wood).